We begin with the raw amino-acid sequence, 62 residues long: Conotoxin reg3.7 (62 aa).

The signal sequence occupies residues R1–A15. The propeptide occupies L16–R45. The segment at P17–N37 is disordered. 3 disulfides stabilise this stretch: C46–C60, C47–C58, and C52–C61. The residue at position 61 (C61) is a Cysteine amide.

This sequence belongs to the conotoxin M superfamily. In terms of tissue distribution, expressed by the venom duct.

It is found in the secreted. This Conus regius (Crown cone) protein is Conotoxin reg3.7.